A 460-amino-acid chain; its full sequence is Metal cation symporter ZIP8 (460 aa).

Positions 1–22 (MAPGRAVAGLLLLAAAGLGGVA) are cleaved as a signal peptide. The Extracellular portion of the chain corresponds to 23–132 (EGPGLAFSED…PSHSEVWGYG (110 aa)). 2 N-linked (GlcNAc...) asparagine glycosylation sites follow: N40 and N88. Residues 133-153 (FLSVTIINLASLLGLILTPLI) traverse the membrane as a helical segment. Topologically, residues 154 to 160 (KKSYFPK) are cytoplasmic. A helical transmembrane segment spans residues 161–181 (ILTFFVGLAIGTLFSNAIFQL). At 182 to 191 (IPEAFGFDPK) the chain is on the extracellular side. Residues 192 to 212 (VDSYVEKAVAVFGGFYLLFFF) traverse the membrane as a helical segment. Over 213 to 365 (ERMLKMLLKT…LNAGMSTRQA (153 aa)) the chain is Cytoplasmic. The XEXPHE-motif motif lies at 343 to 348 (EEFPHE). A helical transmembrane segment spans residues 366-386 (LLFNFLSACSCYVGLAFGILV). At 387–388 (GN) the chain is on the extracellular side. The helical transmembrane segment at 389–409 (NFAPNIIFALAGGMFLYISLA) threads the bilayer. At 410 to 429 (DMFPEMNDMLREKVTGRKTD) the chain is on the cytoplasmic side. Residues 430-450 (FTFFMIQNAGMLTGFTAILLI) form a helical membrane-spanning segment. Residues 451–460 (TLYAGEIELE) lie on the Extracellular side of the membrane.

It belongs to the ZIP transporter (TC 2.A.5) family. In terms of assembly, homodimer. N-glycosylated. N-glycosylation is not required for proper iron and zinc transport. Ubiquitously expressed. Expressed in thymus, placenta, lung, liver, pancreas, salivary gland and, to a lower extent, in spleen, testis, ovary, small intestine, colon, leukocyte, heart. Highest expression is observed in pancreas. Expressed by macrophages (at protein level). Expressed by microvascular capillary endothelial cells that constitute the blood-brain barrier (at protein level).

The protein localises to the cell membrane. It localises to the lysosome membrane. The protein resides in the apical cell membrane. It is found in the basolateral cell membrane. The enzyme catalyses Zn(2+)(out) + 2 hydrogencarbonate(out) = Zn(2+)(in) + 2 hydrogencarbonate(in). It catalyses the reaction selenite(out) + Zn(2+)(out) + hydrogencarbonate(out) = selenite(in) + Zn(2+)(in) + hydrogencarbonate(in). The catalysed reaction is Mn(2+)(out) + 2 hydrogencarbonate(out) = Mn(2+)(in) + 2 hydrogencarbonate(in). It carries out the reaction Fe(2+)(out) + 2 hydrogencarbonate(out) = Fe(2+)(in) + 2 hydrogencarbonate(in). The enzyme catalyses Cd(2+)(out) + 2 hydrogencarbonate(out) = Cd(2+)(in) + 2 hydrogencarbonate(in). It catalyses the reaction Co(2+)(out) + 2 hydrogencarbonate(out) = Co(2+)(in) + 2 hydrogencarbonate(in). Its function is as follows. Electroneutral divalent metal cation:bicarbonate symporter of the plasma membrane mediating the cellular uptake of zinc and manganese, two divalent metal cations important for development, tissue homeostasis and immunity. Transports an electroneutral complex composed of a divalent metal cation and two bicarbonate anions or alternatively a bicarbonate and a selenite anion. Thereby, it also contributes to the cellular uptake of selenium, an essential trace metal and micronutrient. Also imports cadmium a non-essential metal which is cytotoxic and carcinogenic. May also transport iron and cobalt through membranes. Through zinc import, indirectly regulates the metal-dependent transcription factor MTF1 and the expression of some metalloproteases involved in cartilage catabolism and also probably heart development. Also indirectly regulates the expression of proteins involved in cell morphology and cytoskeleton organization. Indirectly controls innate immune function and inflammatory response by regulating zinc cellular uptake which in turn modulates the expression of genes specific of these processes. Protects, for instance, cells from injury and death at the onset of inflammation. By regulating zinc influx into monocytes also directly modulates their adhesion to endothelial cells and arteries. Reclaims manganese from the bile at the apical membrane of hepatocytes, thereby regulating the activity of the manganese-dependent enzymes through the systemic levels of the nutrient. Also participates in manganese reabsorption in the proximal tubule of the kidney. By mediating the extracellular uptake of manganese by cells of the blood-brain barrier, may also play a role in the transport of the micronutrient to the brain. With manganese cellular uptake also participates in mitochondrial proper function. Finally, also probably functions intracellularly, translocating zinc from lysosome to cytosol to indirectly enhance the expression of specific genes during TCR-mediated T cell activation. This chain is Metal cation symporter ZIP8, found in Homo sapiens (Human).